Consider the following 981-residue polypeptide: RNA-directed RNA polymerase (981 aa).

The RdRp catalytic domain maps to 579-701; the sequence is TELVETDYSK…SGNVSDTLLT (123 aa). Positions 879 to 981 are disordered; sequence EVQAGPSQQQ…RPRRQRRTPV (103 aa). The span at 883-898 shows a compositional bias: polar residues; it reads GPSQQQTDKDGTNPTG. Basic and acidic residues predominate over residues 915–936; the sequence is GHTRCTRRSDRGPGERDANVRD. Over residues 972 to 981 the composition is skewed to basic residues; sequence RPRRQRRTPV.

This sequence belongs to the nodaviridae RNA polymerase family.

The enzyme catalyses RNA(n) + a ribonucleoside 5'-triphosphate = RNA(n+1) + diphosphate. RNA-dependent RNA polymerase which replicates the viral genome composed of 2 RNA segments, RNA1 and RNA2. The polypeptide is RNA-directed RNA polymerase (Atlantic halibut nervous necrosis virus (AhNNV)).